Reading from the N-terminus, the 762-residue chain is Phosphoribosylformylglycinamidine synthase subunit PurL (762 aa).

Residue His58 is part of the active site. Tyr61 and Arg105 together coordinate ATP. Mg(2+) is bound at residue Glu107. Substrate contacts are provided by residues 108-111 (SHNH) and Arg130. Catalysis depends on His109, which acts as the Proton acceptor. Residue Asp131 participates in Mg(2+) binding. Substrate is bound at residue Gln255. Residue Asp283 participates in Mg(2+) binding. 327–329 (ESQ) contacts substrate. Asn513 and Gly550 together coordinate ATP. Asn551 provides a ligand contact to Mg(2+). Residue Ser553 coordinates substrate.

Belongs to the FGAMS family. As to quaternary structure, monomer. Part of the FGAM synthase complex composed of 1 PurL, 1 PurQ and 2 PurS subunits.

It is found in the cytoplasm. It carries out the reaction N(2)-formyl-N(1)-(5-phospho-beta-D-ribosyl)glycinamide + L-glutamine + ATP + H2O = 2-formamido-N(1)-(5-O-phospho-beta-D-ribosyl)acetamidine + L-glutamate + ADP + phosphate + H(+). The protein operates within purine metabolism; IMP biosynthesis via de novo pathway; 5-amino-1-(5-phospho-D-ribosyl)imidazole from N(2)-formyl-N(1)-(5-phospho-D-ribosyl)glycinamide: step 1/2. Part of the phosphoribosylformylglycinamidine synthase complex involved in the purines biosynthetic pathway. Catalyzes the ATP-dependent conversion of formylglycinamide ribonucleotide (FGAR) and glutamine to yield formylglycinamidine ribonucleotide (FGAM) and glutamate. The FGAM synthase complex is composed of three subunits. PurQ produces an ammonia molecule by converting glutamine to glutamate. PurL transfers the ammonia molecule to FGAR to form FGAM in an ATP-dependent manner. PurS interacts with PurQ and PurL and is thought to assist in the transfer of the ammonia molecule from PurQ to PurL. The chain is Phosphoribosylformylglycinamidine synthase subunit PurL from Corynebacterium glutamicum (strain ATCC 13032 / DSM 20300 / JCM 1318 / BCRC 11384 / CCUG 27702 / LMG 3730 / NBRC 12168 / NCIMB 10025 / NRRL B-2784 / 534).